The chain runs to 156 residues: Endogenous retrovirus group K member 18 Pro protein (156 aa).

One can recognise a Peptidase A2 domain in the interval 21–96 (LEGLVDTGAD…IPLNLWGRDL (76 aa)). Residue Asp-26 is part of the active site. The G-patch domain maps to 111 to 156 (YSPMSQKIMTKMGYIPGKGLGKNEDGIKVPIEAKINHGREGTGYPF).

The protein belongs to the peptidase A2 family. HERV class-II K(HML-2) subfamily. Active as a homodimer. In terms of processing, autoproteolytically processed at the N-terminus. Expected C-terminal autoprocessing not detected. The sequence shown is that of the processed Pro protein.

The enzyme catalyses Processing at the authentic HIV-1 PR recognition site and release of the mature p17 matrix and the p24 capsid protein, as a result of the cleavage of the -SQNY-|-PIVQ- cleavage site.. Its function is as follows. Retroviral proteases have roles in the processing of the primary translation products and the maturation of the viral particle. Endogenous Pro proteins may have kept, lost or modified their original function during evolution. The protein is Endogenous retrovirus group K member 18 Pro protein (ERVK-18) of Homo sapiens (Human).